A 486-amino-acid polypeptide reads, in one-letter code: UDP-N-acetylmuramoyl-L-alanyl-D-glutamate--2,6-diaminopimelate ligase (486 aa).

UDP-N-acetyl-alpha-D-muramoyl-L-alanyl-D-glutamate is bound at residue Ser31. 109–115 (GTNGKTT) serves as a coordination point for ATP. UDP-N-acetyl-alpha-D-muramoyl-L-alanyl-D-glutamate is bound by residues Asn150, 151-152 (TT), Ser178, and Arg186. An N6-carboxylysine modification is found at Lys218. Meso-2,6-diaminopimelate is bound by residues Arg381, 405 to 408 (DNPR), Gly455, and Glu459. The Meso-diaminopimelate recognition motif motif lies at 405-408 (DNPR).

Belongs to the MurCDEF family. MurE subfamily. Mg(2+) is required as a cofactor. Post-translationally, carboxylation is probably crucial for Mg(2+) binding and, consequently, for the gamma-phosphate positioning of ATP.

It localises to the cytoplasm. The catalysed reaction is UDP-N-acetyl-alpha-D-muramoyl-L-alanyl-D-glutamate + meso-2,6-diaminopimelate + ATP = UDP-N-acetyl-alpha-D-muramoyl-L-alanyl-gamma-D-glutamyl-meso-2,6-diaminopimelate + ADP + phosphate + H(+). It functions in the pathway cell wall biogenesis; peptidoglycan biosynthesis. In terms of biological role, catalyzes the addition of meso-diaminopimelic acid to the nucleotide precursor UDP-N-acetylmuramoyl-L-alanyl-D-glutamate (UMAG) in the biosynthesis of bacterial cell-wall peptidoglycan. The polypeptide is UDP-N-acetylmuramoyl-L-alanyl-D-glutamate--2,6-diaminopimelate ligase (Halalkalibacterium halodurans (strain ATCC BAA-125 / DSM 18197 / FERM 7344 / JCM 9153 / C-125) (Bacillus halodurans)).